The chain runs to 103 residues: Histone H4, major (103 aa).

The span at 1–12 shows a compositional bias: gly residues; the sequence is MAGGKGGKGMGK. The interval 1–29 is disordered; it reads MAGGKGGKGMGKVGAKRHSKRSNKASIEG. Lysine 5, lysine 8, lysine 12, and lysine 16 each carry N6-acetyllysine. A compositionally biased stretch (basic residues) spans 14–23; sequence GAKRHSKRSN. A DNA-binding region spans residues 16 to 21; the sequence is KRHSKR.

The protein belongs to the histone H4 family. In terms of assembly, the nucleosome is a histone octamer containing two molecules each of H2A, H2B, H3 and H4 assembled in one H3-H4 heterotetramer and two H2A-H2B heterodimers. The octamer wraps approximately 147 bp of DNA.

It is found in the nucleus. The protein resides in the chromosome. In terms of biological role, core component of nucleosome. Nucleosomes wrap and compact DNA into chromatin, limiting DNA accessibility to the cellular machineries which require DNA as a template. Histones thereby play a central role in transcription regulation, DNA repair, DNA replication and chromosomal stability. DNA accessibility is regulated via a complex set of post-translational modifications of histones, also called histone code, and nucleosome remodeling. The protein is Histone H4, major of Tetrahymena pyriformis.